The sequence spans 119 residues: Iron-sulfur cluster insertion protein ErpA (119 aa).

The iron-sulfur cluster site is built by cysteine 47, cysteine 111, and cysteine 113.

Belongs to the HesB/IscA family. As to quaternary structure, homodimer. It depends on iron-sulfur cluster as a cofactor.

In terms of biological role, required for insertion of 4Fe-4S clusters for at least IspG. The polypeptide is Iron-sulfur cluster insertion protein ErpA (Blochmanniella floridana).